Here is a 479-residue protein sequence, read N- to C-terminus: Odorant receptor coreceptor (479 aa).

Residues 1–43 are Cytoplasmic-facing; sequence MHVQPTKYHGLVLDLMPNIRLMQGFGHFLFRYVSGPVLIRKLY. Residues 44–64 traverse the membrane as a helical segment; sequence SWWNLIMILLQYFAIMGNLVM. The Extracellular portion of the chain corresponds to 65–73; sequence NTGDVNELT. A helical membrane pass occupies residues 74 to 94; the sequence is ANTITTLFFTHSVTKFIYVAV. The Cytoplasmic segment spans residues 95–133; the sequence is NSEHFYRTLGIWNQPNSHSLFAESDARYHSIALAKMRKL. The helical transmembrane segment at 134–154 threads the bilayer; the sequence is LVMVMVTTVLSVVAWITITFF. At 155-187 the chain is on the extracellular side; it reads GDSVKNVFDKETNETYTVEIPRLPIKALYPWDA. Residue N167 is glycosylated (N-linked (GlcNAc...) asparagine). A helical membrane pass occupies residues 188–208; that stretch reads MSGVPYFFSFVYQAYFLLFSM. Topologically, residues 209 to 344 are cytoplasmic; that stretch reads CQANLADVMF…VERHKHVVRL (136 aa). The helical transmembrane segment at 345–365 threads the bilayer; it reads VSAIGETYGAALLLHMLTSTI. Residues 366 to 383 lie on the Extracellular side of the membrane; that stretch reads KLTLLAYQATKIDALNVY. A helical transmembrane segment spans residues 384–404; sequence GLTVIGYLVYALAQVFLFCIF. Residues 405–455 are Cytoplasmic-facing; sequence GNRLIEESSSVMEAAYSCHWYDGSEEAKTFVQIVCQQCQKAMTISGAKFFT. A helical transmembrane segment spans residues 456-476; sequence VSLDLFASVLGAVVTYFMVLV. Over 477–479 the chain is Extracellular; sequence QLK.

Belongs to the insect chemoreceptor superfamily. Heteromeric odorant receptor channel (TC 1.A.69) family. Orco subfamily. As to quaternary structure, heterodimer with conventional odorant receptors (ORs). Expressed in female antenna, maxillary palp and proboscis. Not detected in male tissues.

The protein localises to the cell membrane. Odorant coreceptor which complexes with conventional odorant receptors (ORs) to form odorant-sensing units, providing sensitive and prolonged odorant signaling and calcium permeability. Orco is a universal and integral part of the functional odorant receptor, involved in the dendritic localization of other olfactory receptors. Required for detecting a host for blood feeding. Plays a key role in preferred attraction of females for humans over non-human hosts for blood feeding. The sequence is that of Odorant receptor coreceptor from Aedes albopictus (Asian tiger mosquito).